Reading from the N-terminus, the 432-residue chain is Neuropeptide FF receptor 1 (432 aa).

At 1 to 43 (MEAEPSQPPNGSWPLGQNGSDVETSMATSLTFSSYYQHSSPVA) the chain is on the extracellular side. Asn10 and Asn18 each carry an N-linked (GlcNAc...) asparagine glycan. The helical transmembrane segment at 44-64 (AMFIAAYVLIFLLCMVGNTLV) threads the bilayer. Residues 65-80 (CFIVLKNRHMRTVTNM) lie on the Cytoplasmic side of the membrane. The chain crosses the membrane as a helical span at residues 81–101 (FILNLAVSDLLVGIFCMPTTL). Topologically, residues 102 to 117 (VDNLITGWPFDNATCK) are extracellular. An N-linked (GlcNAc...) asparagine glycan is attached at Asn113. A disulfide bond links Cys116 and Cys203. A helical transmembrane segment spans residues 118-138 (MSGLVQGMSVSASVFTLVAIA). The Cytoplasmic segment spans residues 139–158 (VERFRCIVHPFREKLTLRKA). The chain crosses the membrane as a helical span at residues 159 to 179 (LFTIAVIWALALLIMCPSAVT). The Extracellular portion of the chain corresponds to 180 to 214 (LTVTREEHHFMLDARNRSYPLYSCWEAWPEKGMRK). The N-linked (GlcNAc...) asparagine glycan is linked to Asn195. The chain crosses the membrane as a helical span at residues 215–235 (VYTAVLFAHIYLVPLALIVVM). Residues 236 to 273 (YVRIARKLCQAPGPARDTEEAVAEGGRTSRRRARVVHM) lie on the Cytoplasmic side of the membrane. The helical transmembrane segment at 274–294 (LVMVALFFTLSWLPLWVLLLL) threads the bilayer. Topologically, residues 295–309 (IDYGELSELQLHLLS) are extracellular. The helical transmembrane segment at 310–330 (VYAFPLAHWLAFFHSSANPII) threads the bilayer. The Cytoplasmic segment spans residues 331–432 (YGYFNENFRR…MPLTIPAWNI (102 aa)). The segment covering 380-406 (PSDSGLPSESGPSSGVPGPGRLPLRNG) has biased composition (low complexity). A disordered region spans residues 380-422 (PSDSGLPSESGPSSGVPGPGRLPLRNGRVAHQDGPGEGPGCNH).

This sequence belongs to the G-protein coupled receptor 1 family. As to expression, expressed at high levels in the hypothalamus. Moderate levels found in the midbrain, thalamus, medulla oblongata, testis, eye, whole brain, cerebral cortex, striatum, hippocampus, cerebellum, optic nerve, placenta, spinal cord, pituitary gland and ovary.

The protein resides in the cell membrane. In terms of biological role, receptor for NPAF (A-18-F-amide) and NPFF (F-8-F-amide) neuropeptides, also known as morphine-modulating peptides. Can also be activated by a variety of naturally occurring or synthetic FMRF-amide like ligands. This receptor mediates its action by association with G proteins that activate a phosphatidylinositol-calcium second messenger system. This Rattus norvegicus (Rat) protein is Neuropeptide FF receptor 1 (Npffr1).